Consider the following 353-residue polypeptide: Photosystem II D2 protein (353 aa).

The residue at position 2 (Thr2) is an N-acetylthreonine. Thr2 carries the phosphothreonine modification. A helical membrane pass occupies residues 41-61; that stretch reads CAYFALGGWFTGTTFVTSWYT. Residue His118 participates in chlorophyll a binding. A helical transmembrane segment spans residues 125–141; sequence GFMLRQFELARSVQLRP. Positions 130 and 143 each coordinate pheophytin a. Residues 153-166 traverse the membrane as a helical segment; that stretch reads VFVSVFLIYPLGQS. His198 is a binding site for chlorophyll a. The helical transmembrane segment at 208–228 threads the bilayer; the sequence is AALLCAIHGATVENTLFEDGD. 2 residues coordinate a plastoquinone: His215 and Phe262. A Fe cation-binding site is contributed by His215. A Fe cation-binding site is contributed by His269. Residues 279–295 form a helical membrane-spanning segment; it reads GLWMSAIGVVGLALNLR.

It belongs to the reaction center PufL/M/PsbA/D family. In terms of assembly, PSII is composed of 1 copy each of membrane proteins PsbA, PsbB, PsbC, PsbD, PsbE, PsbF, PsbH, PsbI, PsbJ, PsbK, PsbL, PsbM, PsbT, PsbX, PsbY, PsbZ, Psb30/Ycf12, at least 3 peripheral proteins of the oxygen-evolving complex and a large number of cofactors. It forms dimeric complexes. It depends on The D1/D2 heterodimer binds P680, chlorophylls that are the primary electron donor of PSII, and subsequent electron acceptors. It shares a non-heme iron and each subunit binds pheophytin, quinone, additional chlorophylls, carotenoids and lipids. There is also a Cl(-1) ion associated with D1 and D2, which is required for oxygen evolution. The PSII complex binds additional chlorophylls, carotenoids and specific lipids. as a cofactor.

The protein resides in the plastid. It is found in the chloroplast thylakoid membrane. It catalyses the reaction 2 a plastoquinone + 4 hnu + 2 H2O = 2 a plastoquinol + O2. In terms of biological role, photosystem II (PSII) is a light-driven water:plastoquinone oxidoreductase that uses light energy to abstract electrons from H(2)O, generating O(2) and a proton gradient subsequently used for ATP formation. It consists of a core antenna complex that captures photons, and an electron transfer chain that converts photonic excitation into a charge separation. The D1/D2 (PsbA/PsbD) reaction center heterodimer binds P680, the primary electron donor of PSII as well as several subsequent electron acceptors. D2 is needed for assembly of a stable PSII complex. In Cryptomeria japonica (Japanese cedar), this protein is Photosystem II D2 protein.